We begin with the raw amino-acid sequence, 320 residues long: o-succinylbenzoate synthase (320 aa).

Lysine 133 functions as the Proton donor in the catalytic mechanism. Aspartate 161, glutamate 190, and aspartate 213 together coordinate Mg(2+). The Proton acceptor role is filled by lysine 235.

This sequence belongs to the mandelate racemase/muconate lactonizing enzyme family. MenC type 1 subfamily. It depends on a divalent metal cation as a cofactor.

The enzyme catalyses (1R,6R)-6-hydroxy-2-succinyl-cyclohexa-2,4-diene-1-carboxylate = 2-succinylbenzoate + H2O. It functions in the pathway quinol/quinone metabolism; 1,4-dihydroxy-2-naphthoate biosynthesis; 1,4-dihydroxy-2-naphthoate from chorismate: step 4/7. Its pathway is quinol/quinone metabolism; menaquinone biosynthesis. Converts 2-succinyl-6-hydroxy-2,4-cyclohexadiene-1-carboxylate (SHCHC) to 2-succinylbenzoate (OSB). This chain is o-succinylbenzoate synthase, found in Shigella flexneri.